Reading from the N-terminus, the 196-residue chain is tRNA (pseudouridine(54)-N(1))-methyltransferase (196 aa).

L126 is a binding site for S-adenosyl-L-methionine.

The protein belongs to the methyltransferase superfamily. TrmY family. In terms of assembly, homodimer.

The protein resides in the cytoplasm. It catalyses the reaction pseudouridine(54) in tRNA + S-adenosyl-L-methionine = N(1)-methylpseudouridine(54) in tRNA + S-adenosyl-L-homocysteine + H(+). Functionally, specifically catalyzes the N1-methylation of pseudouridine at position 54 (Psi54) in tRNAs. This is tRNA (pseudouridine(54)-N(1))-methyltransferase from Halobacterium salinarum (strain ATCC 700922 / JCM 11081 / NRC-1) (Halobacterium halobium).